Reading from the N-terminus, the 121-residue chain is Trypsin/alpha-amylase inhibitor CMX2 (121 aa).

An N-terminal signal peptide occupies residues 1–24 (MAFKHQLILSTAILLAVLAAASAS).

The protein belongs to the protease inhibitor I6 (cereal trypsin/alpha-amylase inhibitor) family.

The protein resides in the secreted. The protein is Trypsin/alpha-amylase inhibitor CMX2 of Triticum aestivum (Wheat).